Reading from the N-terminus, the 125-residue chain is Protein ApaG (125 aa).

An ApaG domain is found at Met1 to His125.

In Enterobacter sp. (strain 638), this protein is Protein ApaG.